Here is a 106-residue protein sequence, read N- to C-terminus: MALWMQCLPLVLVLLFSTPNTEALANQHLCGSHLVEALYLVCGDRGFFYYPKIKRDIEQAQVNGPQDNELDGMQFQPQEYQKMKRGIVEQCCHSTCSLFQLENYCN.

The N-terminal stretch at 1 to 23 (MALWMQCLPLVLVLLFSTPNTEA) is a signal peptide. 3 disulfide bridges follow: Cys30/Cys92, Cys42/Cys105, and Cys91/Cys96. Residues 56–83 (DIEQAQVNGPQDNELDGMQFQPQEYQKM) constitute a propeptide, c peptide.

It belongs to the insulin family. In terms of assembly, heterodimer of a B chain and an A chain linked by two disulfide bonds.

It is found in the secreted. Insulin decreases blood glucose concentration. It increases cell permeability to monosaccharides, amino acids and fatty acids. It accelerates glycolysis, the pentose phosphate cycle, and glycogen synthesis in liver. The chain is Insulin-2 (ins-b) from Xenopus laevis (African clawed frog).